Consider the following 254-residue polypeptide: MTKLEVCCYSVDCAQIAEKAGADRVELCCGQSEGGVTPSVGALMQARETVTIPVHPIVRPRGGDFCYSSNDFTIMKNDIARIRDLGFAGVVVGVLDTDGHIDMPRMREIMSVSGSLVVTFHRAFDMCQNPMIALKQLAELNVARILTSGQQQNAELGLALLKDLVAATKDQGPIIMAGAGVRLTNMQKFIDAGIRELHSSAGRTVPSTMRYRKAGVTMCADSDVDEFSHYCVDGEVVEAMKSLLVMGSPLAKHT.

It belongs to the CutC family.

Its subcellular location is the cytoplasm. In Yersinia pestis bv. Antiqua (strain Angola), this protein is PF03932 family protein CutC.